Reading from the N-terminus, the 418-residue chain is Magnesium-chelatase subunit ChlI-2, chloroplastic (418 aa).

The N-terminal 55 residues, 1–55, are a transit peptide targeting the chloroplast; it reads MASLLGRSPSSILTCPRISSPSSTSSMSHLCFGPEKLSGRIQFNPKKNRSRYHVS. N-acetylvaline is present on Val-56. 2 cysteine pairs are disulfide-bonded: Cys-96–Cys-187 and Cys-348–Cys-390. An ATP-binding site is contributed by 113 to 120; sequence GDRGTGKS.

Belongs to the Mg-chelatase subunits D/I family. In terms of assembly, the magnesium chelatase complex is a heterotrimer consisting of subunits CHLI, CHLD and CHLH. In terms of tissue distribution, expressed in leaves.

Its subcellular location is the plastid. It localises to the chloroplast. The catalysed reaction is protoporphyrin IX + Mg(2+) + ATP + H2O = Mg-protoporphyrin IX + ADP + phosphate + 3 H(+). The protein operates within porphyrin-containing compound metabolism; chlorophyll biosynthesis. Its activity is regulated as follows. Redox regulation; active in reducing conditions, inactive in oxidizing conditions. Thioredoxins f and m mediate the reversible reductive activation of oxidized CHLI2. Its function is as follows. Involved in chlorophyll biosynthesis. Catalyzes the insertion of magnesium ion into protoporphyrin IX to yield Mg-protoporphyrin IX. The reaction takes place in two steps, with an ATP-dependent activation followed by an ATP-dependent chelation step. Possesses low affinity for ATP and may play a limited role in chlorophyll biosynthesis, and contributes to the assembly of the Mg-chelatase complex. The polypeptide is Magnesium-chelatase subunit ChlI-2, chloroplastic (CHLI2) (Arabidopsis thaliana (Mouse-ear cress)).